The sequence spans 487 residues: Glutamate--tRNA ligase (487 aa).

The short motif at 11-21 is the 'HIGH' region element; it reads PSPTGYPHLGN. Positions 108, 110, 135, and 137 each coordinate Zn(2+). The 'KMSKS' region motif lies at 245-249; that stretch reads KLSKR. Lys-248 is a binding site for ATP.

The protein belongs to the class-I aminoacyl-tRNA synthetase family. Glutamate--tRNA ligase type 1 subfamily. As to quaternary structure, monomer. Zn(2+) serves as cofactor.

The protein resides in the cytoplasm. The catalysed reaction is tRNA(Glu) + L-glutamate + ATP = L-glutamyl-tRNA(Glu) + AMP + diphosphate. Catalyzes the attachment of glutamate to tRNA(Glu) in a two-step reaction: glutamate is first activated by ATP to form Glu-AMP and then transferred to the acceptor end of tRNA(Glu). The protein is Glutamate--tRNA ligase of Dehalococcoides mccartyi (strain CBDB1).